The sequence spans 179 residues: Large ribosomal subunit protein uL5 (179 aa).

Belongs to the universal ribosomal protein uL5 family. Part of the 50S ribosomal subunit; part of the 5S rRNA/L5/L18/L25 subcomplex. Contacts the 5S rRNA and the P site tRNA. Forms a bridge to the 30S subunit in the 70S ribosome.

Its function is as follows. This is one of the proteins that bind and probably mediate the attachment of the 5S RNA into the large ribosomal subunit, where it forms part of the central protuberance. In the 70S ribosome it contacts protein S13 of the 30S subunit (bridge B1b), connecting the 2 subunits; this bridge is implicated in subunit movement. Contacts the P site tRNA; the 5S rRNA and some of its associated proteins might help stabilize positioning of ribosome-bound tRNAs. The polypeptide is Large ribosomal subunit protein uL5 (Pectobacterium carotovorum subsp. carotovorum (strain PC1)).